A 352-amino-acid polypeptide reads, in one-letter code: uncharacterized protein (352 aa).

The N-terminal stretch at 1 to 22 (MAIYLDKLKMPIIIGLIVLIIA) is a signal peptide.

The protein belongs to the bacterial solute-binding protein 1 family. WtpA subfamily.

This is an uncharacterized protein from Staphylothermus marinus (strain ATCC 43588 / DSM 3639 / JCM 9404 / F1).